Here is a 258-residue protein sequence, read N- to C-terminus: Regulatory protein RecX (258 aa).

The protein belongs to the RecX family.

It is found in the cytoplasm. Functionally, modulates RecA activity. The chain is Regulatory protein RecX from Streptococcus pyogenes serotype M3 (strain ATCC BAA-595 / MGAS315).